The following is a 300-amino-acid chain: GTP-binding protein At2g22870 (300 aa).

The EngB-type G domain occupies 119 to 297 (DRPEIAILGR…LLHMSQLRNY (179 aa)). GTP-binding positions include 127–134 (GRSNVGKS), 154–158 (GKTQL), 172–175 (DLPG), 239–242 (TKCD), and 276–278 (TSS). Mg(2+) contacts are provided by S134 and T156.

This sequence belongs to the TRAFAC class TrmE-Era-EngA-EngB-Septin-like GTPase superfamily. EngB GTPase family. It depends on Mg(2+) as a cofactor.

This chain is GTP-binding protein At2g22870 (EMB2001), found in Arabidopsis thaliana (Mouse-ear cress).